Here is an 880-residue protein sequence, read N- to C-terminus: Zinc-responsive transcriptional regulator ZAP1 (880 aa).

2 disordered regions span residues 1 to 26 and 140 to 164; these read MDALTPRDSPKRDDSMATSAATAASA and NNFHSVASDPTSPQQNSKSDLPRRK. A compositionally biased stretch (low complexity) spans 17–26; it reads ATSAATAASA. The segment covering 147–158 has biased composition (polar residues); it reads SDPTSPQQNSKS. Phosphoserine occurs at positions 156 and 166. The segment at 182–502 is zinc-responsive domain 1 (ZRD(AD1)); sequence KPNPPPGSDD…LTNNDLNDLI (321 aa). The tract at residues 207 to 402 is transcription activation domain 1 (AD1); sequence HPKSEANIKQ…YEVPFGKHIN (196 aa). Disordered stretches follow at residues 436-482 and 510-555; these read NRCN…VNNS and RFRN…PSSI. A compositionally biased stretch (low complexity) spans 442–456; the sequence is NNLNGSNNNTAGATS. Residues 460–474 are compositionally biased toward basic residues; sequence QHHHHRIQFHSHKPN. Phosphoserine is present on Ser515. Residues 545 to 555 are compositionally biased toward low complexity; that stretch reads SSLEDSLPSSI. The segment at 579–604 adopts a C2H2-type 1 zinc-finger fold; sequence LKCKWKECPESCSSLFDLQRHLLKDH. Residues 579–641 form a zinc-responsive domain 2 (ZRD(AD2)) region; the sequence is LKCKWKECPE…SIVNHINCQH (63 aa). Cys581, Cys586, His599, His604, Cys618, Cys623, His636, and His641 together coordinate Zn(2+). The segment at 611-640 is transcription activation domain 2 (AD2); the sequence is HPMEPLACNWEDCDFLGDDTCSIVNHINCQ. A C2H2-type 2; atypical zinc finger spans residues 616–641; it reads LACNWEDCDFLGDDTCSIVNHINCQH. 5 consecutive C2H2-type zinc fingers follow at residues 705–730, 738–762, 768–790, 796–818, and 824–846; these read VICQWDGCNKSFSSAQELNDHLEAVH, YQCLWHDCHRTFPQRQKLIRHLKVH, YKCKTCKRCFSSEETLVQHTRTH, YKCHICNKKFAISSSLKIHIRTH, and LQCKICGKRFNESSNLSKHIKTH. The DNA-binding domain DNA-binding region spans 705-846; that stretch reads VICQWDGCNK…SNLSKHIKTH (142 aa).

The protein resides in the nucleus. With respect to regulation, active in zinc-limited cells and repressed in replete cells. Zinc controls ZAP1 DNA binding activity. Functionally, transcription regulator controlling zinc-responsive gene expression. Binds to zinc-responsive elements (ZREs) (consensus sequence 5'-ACCYYNAAGGT-3') in the promoter of target genes. Recruits SWI/SNF, SAGA, and Mediator complexes as coactivators in a zinc-responsive manner. Involved in zinc ion homeostasis by zinc-responsive transcriptional regulation of the zinc uptake system genes ZTR1 and ZTR2. Positively regulates ETR1 expression, affecting mitochondrial function. This chain is Zinc-responsive transcriptional regulator ZAP1 (ZAP1), found in Saccharomyces cerevisiae (strain ATCC 204508 / S288c) (Baker's yeast).